Consider the following 118-residue polypeptide: Late cornified envelope protein 1E (118 aa).

Residues 1 to 10 (MSCQQSQQQC) show a composition bias toward low complexity. 2 disordered regions span residues 1-23 (MSCQ…CPPK) and 84-118 (RSHR…GGCC). Over residues 11–23 (QPPPKCTPKCPPK) the composition is skewed to pro residues. Residues 92–103 (SSDCCSQPSGGS) are compositionally biased toward low complexity. The span at 104-118 (SCCGGGSGQHSGGCC) shows a compositional bias: gly residues.

This sequence belongs to the LCE family. As to quaternary structure, interacts with CYSRT1. As to expression, skin-specific. Expression was readily detected in adult trunk skin, adult arm skin, fetal skin, penal skin, vulva, esophagus and tongue. Not expressed in the cervix, rectum, lung, colon, or placenta.

Its function is as follows. Precursors of the cornified envelope of the stratum corneum. This chain is Late cornified envelope protein 1E (LCE1E), found in Homo sapiens (Human).